The primary structure comprises 427 residues: Tol-Pal system protein TolB (427 aa).

Residues 1–25 (MKTFAQLRLLLAAAALALLSFSAQA) form the signal peptide.

It belongs to the TolB family. As to quaternary structure, the Tol-Pal system is composed of five core proteins: the inner membrane proteins TolA, TolQ and TolR, the periplasmic protein TolB and the outer membrane protein Pal. They form a network linking the inner and outer membranes and the peptidoglycan layer.

The protein localises to the periplasm. Its function is as follows. Part of the Tol-Pal system, which plays a role in outer membrane invagination during cell division and is important for maintaining outer membrane integrity. The protein is Tol-Pal system protein TolB of Azoarcus sp. (strain BH72).